Consider the following 407-residue polypeptide: Multifunctional CCA protein (407 aa).

Gly8 and Arg11 together coordinate ATP. The CTP site is built by Gly8 and Arg11. Residues Asp21 and Asp23 each contribute to the Mg(2+) site. Arg91, Arg137, and Arg140 together coordinate ATP. The CTP site is built by Arg91, Arg137, and Arg140. The 102-residue stretch at 226–327 folds into the HD domain; it reads TGIHVMAVVD…VKLLERTDAL (102 aa).

It belongs to the tRNA nucleotidyltransferase/poly(A) polymerase family. Bacterial CCA-adding enzyme type 1 subfamily. Monomer. Can also form homodimers and oligomers. Requires Mg(2+) as cofactor. Ni(2+) is required as a cofactor.

It catalyses the reaction a tRNA precursor + 2 CTP + ATP = a tRNA with a 3' CCA end + 3 diphosphate. The enzyme catalyses a tRNA with a 3' CCA end + 2 CTP + ATP = a tRNA with a 3' CCACCA end + 3 diphosphate. In terms of biological role, catalyzes the addition and repair of the essential 3'-terminal CCA sequence in tRNAs without using a nucleic acid template. Adds these three nucleotides in the order of C, C, and A to the tRNA nucleotide-73, using CTP and ATP as substrates and producing inorganic pyrophosphate. tRNA 3'-terminal CCA addition is required both for tRNA processing and repair. Also involved in tRNA surveillance by mediating tandem CCA addition to generate a CCACCA at the 3' terminus of unstable tRNAs. While stable tRNAs receive only 3'-terminal CCA, unstable tRNAs are marked with CCACCA and rapidly degraded. The protein is Multifunctional CCA protein of Aromatoleum aromaticum (strain DSM 19018 / LMG 30748 / EbN1) (Azoarcus sp. (strain EbN1)).